Here is a 224-residue protein sequence, read N- to C-terminus: Phosphoribosylformylglycinamidine synthase subunit PurQ (224 aa).

Residues 2 to 224 (TVAVVRFGGS…DGQGILGAFA (223 aa)) enclose the Glutamine amidotransferase type-1 domain. Residue Cys-85 is the Nucleophile of the active site. Catalysis depends on residues His-202 and Glu-204.

In terms of assembly, part of the FGAM synthase complex composed of 1 PurL, 1 PurQ and 2 PurS subunits.

It localises to the cytoplasm. It carries out the reaction N(2)-formyl-N(1)-(5-phospho-beta-D-ribosyl)glycinamide + L-glutamine + ATP + H2O = 2-formamido-N(1)-(5-O-phospho-beta-D-ribosyl)acetamidine + L-glutamate + ADP + phosphate + H(+). The catalysed reaction is L-glutamine + H2O = L-glutamate + NH4(+). Its pathway is purine metabolism; IMP biosynthesis via de novo pathway; 5-amino-1-(5-phospho-D-ribosyl)imidazole from N(2)-formyl-N(1)-(5-phospho-D-ribosyl)glycinamide: step 1/2. In terms of biological role, part of the phosphoribosylformylglycinamidine synthase complex involved in the purines biosynthetic pathway. Catalyzes the ATP-dependent conversion of formylglycinamide ribonucleotide (FGAR) and glutamine to yield formylglycinamidine ribonucleotide (FGAM) and glutamate. The FGAM synthase complex is composed of three subunits. PurQ produces an ammonia molecule by converting glutamine to glutamate. PurL transfers the ammonia molecule to FGAR to form FGAM in an ATP-dependent manner. PurS interacts with PurQ and PurL and is thought to assist in the transfer of the ammonia molecule from PurQ to PurL. This Halobacterium salinarum (strain ATCC 700922 / JCM 11081 / NRC-1) (Halobacterium halobium) protein is Phosphoribosylformylglycinamidine synthase subunit PurQ.